The following is a 271-amino-acid chain: Delta(7)-sterol-C5(6)-desaturase (271 aa).

2 helical membrane-spanning segments follow: residues 44–64 and 120–140; these read IGGVLLYFISGFLWCFYIYHL and VGWLSYVIYAAIYLVIVEFGI. Positions 130–259 constitute a Fatty acid hydroxylase domain; that stretch reads AIYLVIVEFG…TIWMDWMFGT (130 aa). Residues 144 to 148 carry the Histidine box-1 motif; sequence HMELH. Residues 158 to 162 carry the Histidine box-2 motif; sequence HATHH. The helical transmembrane segment at 190–210 threads the bilayer; that stretch reads HVVALLLVPMHFSTHIALIFL. Residues 235-239 carry the Histidine box-3 motif; sequence HTIHH.

It belongs to the sterol desaturase family. Fe cation serves as cofactor.

It localises to the endoplasmic reticulum membrane. The catalysed reaction is a Delta(7)-sterol + 2 Fe(II)-[cytochrome b5] + O2 + 2 H(+) = a Delta(5),Delta(7)-sterol + 2 Fe(III)-[cytochrome b5] + 2 H2O. Involved in the biosynthesis of sitosterol and campesterol. In Nicotiana tabacum (Common tobacco), this protein is Delta(7)-sterol-C5(6)-desaturase.